Consider the following 223-residue polypeptide: Adenylate kinase (223 aa).

17-22 (GAGKGT) contributes to the ATP binding site. The tract at residues 37–66 (STGDMLRSQVAKGTPLGVEAKKIMDQGGLV) is NMP. Residues threonine 38, arginine 43, 64-66 (GLV), 93-96 (GFPR), and glutamine 100 contribute to the AMP site. Residues 134-171 (GRLVHPSSGRSYHKLFNPPKVEMTDDVTGEPLVQRSDD) are LID. Residues arginine 135 and 144–145 (SY) each bind ATP. AMP is bound by residues arginine 168 and arginine 179. Residue glutamine 207 participates in ATP binding.

The protein belongs to the adenylate kinase family. AK2 subfamily. In terms of assembly, monomer.

It localises to the cytoplasm. The protein localises to the cytosol. Its subcellular location is the mitochondrion intermembrane space. It carries out the reaction AMP + ATP = 2 ADP. Functionally, catalyzes the reversible transfer of the terminal phosphate group between ATP and AMP. Plays an important role in cellular energy homeostasis and in adenine nucleotide metabolism. Adenylate kinase activity is critical for regulation of the phosphate utilization and the AMP de novo biosynthesis pathways. The protein is Adenylate kinase of Vanderwaltozyma polyspora (strain ATCC 22028 / DSM 70294 / BCRC 21397 / CBS 2163 / NBRC 10782 / NRRL Y-8283 / UCD 57-17) (Kluyveromyces polysporus).